The primary structure comprises 288 residues: Pantothenate synthetase (288 aa).

Residue 35–42 coordinates ATP; sequence MGALHDGH. The Proton donor role is filled by His-42. Gln-66 contacts (R)-pantoate. Gln-66 provides a ligand contact to beta-alanine. 152–155 provides a ligand contact to ATP; sequence GEKD. Gln-158 is a binding site for (R)-pantoate. ATP contacts are provided by residues Gly-181 and 189-192; that span reads LSSR.

Belongs to the pantothenate synthetase family. In terms of assembly, homodimer.

It localises to the cytoplasm. The catalysed reaction is (R)-pantoate + beta-alanine + ATP = (R)-pantothenate + AMP + diphosphate + H(+). It functions in the pathway cofactor biosynthesis; (R)-pantothenate biosynthesis; (R)-pantothenate from (R)-pantoate and beta-alanine: step 1/1. In terms of biological role, catalyzes the condensation of pantoate with beta-alanine in an ATP-dependent reaction via a pantoyl-adenylate intermediate. The chain is Pantothenate synthetase from Maricaulis maris (strain MCS10) (Caulobacter maris).